We begin with the raw amino-acid sequence, 130 residues long: Small ribosomal subunit protein uS9 (130 aa).

Belongs to the universal ribosomal protein uS9 family.

The chain is Small ribosomal subunit protein uS9 from Edwardsiella ictaluri (strain 93-146).